The primary structure comprises 200 residues: ATP-dependent Clp protease proteolytic subunit 1 (200 aa).

S98 functions as the Nucleophile in the catalytic mechanism. Residue H123 is part of the active site.

This sequence belongs to the peptidase S14 family. Fourteen ClpP subunits assemble into 2 heptameric rings which stack back to back to give a disk-like structure with a central cavity, resembling the structure of eukaryotic proteasomes.

The protein localises to the cytoplasm. It catalyses the reaction Hydrolysis of proteins to small peptides in the presence of ATP and magnesium. alpha-casein is the usual test substrate. In the absence of ATP, only oligopeptides shorter than five residues are hydrolyzed (such as succinyl-Leu-Tyr-|-NHMec, and Leu-Tyr-Leu-|-Tyr-Trp, in which cleavage of the -Tyr-|-Leu- and -Tyr-|-Trp bonds also occurs).. Its function is as follows. Cleaves peptides in various proteins in a process that requires ATP hydrolysis. Has a chymotrypsin-like activity. Plays a major role in the degradation of misfolded proteins. In Mycobacterium bovis (strain ATCC BAA-935 / AF2122/97), this protein is ATP-dependent Clp protease proteolytic subunit 1.